An 856-amino-acid chain; its full sequence is Leucine--tRNA ligase (856 aa).

The 'HIGH' region signature appears at 53–63 (PYPSGNLHMGH). The short motif at 622–626 (KMSKS) is the 'KMSKS' region element. K625 is an ATP binding site.

The protein belongs to the class-I aminoacyl-tRNA synthetase family.

The protein localises to the cytoplasm. It catalyses the reaction tRNA(Leu) + L-leucine + ATP = L-leucyl-tRNA(Leu) + AMP + diphosphate. This is Leucine--tRNA ligase from Prochlorococcus marinus (strain MIT 9312).